We begin with the raw amino-acid sequence, 155 residues long: Isotocin-neurophysin IT 1 (155 aa).

The first 19 residues, methionine 1–alanine 19, serve as a signal peptide directing secretion. Cysteine 20 and cysteine 25 are joined by a disulfide. Glycine amide is present on glycine 28. Intrachain disulfides connect cysteine 41-cysteine 85, cysteine 44-cysteine 58, cysteine 52-cysteine 75, cysteine 59-cysteine 65, cysteine 92-cysteine 105, cysteine 99-cysteine 117, and cysteine 106-cysteine 111.

It belongs to the vasopressin/oxytocin family. In terms of processing, seven disulfide bonds are present in neurophysin.

Functionally, isotocin causes contraction of smooth muscles. The protein is Isotocin-neurophysin IT 1 of Takifugu rubripes (Japanese pufferfish).